Consider the following 252-residue polypeptide: Chitooligosaccharide deacetylase (252 aa).

Mg(2+)-binding residues include histidine 61 and histidine 125.

This sequence belongs to the YdjC deacetylase family. ChbG subfamily. In terms of assembly, homodimer. Requires Mg(2+) as cofactor.

Its subcellular location is the cytoplasm. It catalyses the reaction N,N'-diacetylchitobiose + H2O = N-acetyl-beta-D-glucosaminyl-(1-&gt;4)-D-glucosamine + acetate. The enzyme catalyses diacetylchitobiose-6'-phosphate + H2O = N'-monoacetylchitobiose-6'-phosphate + acetate. It participates in glycan degradation; chitin degradation. Its function is as follows. Involved in the degradation of chitin. ChbG is essential for growth on the acetylated chitooligosaccharides chitobiose and chitotriose but is dispensable for growth on cellobiose and chitosan dimer, the deacetylated form of chitobiose. Deacetylation of chitobiose-6-P and chitotriose-6-P is necessary for both the activation of the chb promoter by the regulatory protein ChbR and the hydrolysis of phosphorylated beta-glucosides by the phospho-beta-glucosidase ChbF. Catalyzes the removal of only one acetyl group from chitobiose-6-P to yield monoacetylchitobiose-6-P, the inducer of ChbR and the substrate of ChbF. The protein is Chitooligosaccharide deacetylase of Escherichia coli O6:H1 (strain CFT073 / ATCC 700928 / UPEC).